We begin with the raw amino-acid sequence, 188 residues long: FMN-dependent NADPH-azoreductase (188 aa).

The protein belongs to the azoreductase type 2 family. Homotetramer. Requires FMN as cofactor.

Functionally, catalyzes the reductive cleavage of azo bond in aromatic azo compounds to the corresponding amines. Requires NADPH, but not NADH, as an electron donor for its activity. The sequence is that of FMN-dependent NADPH-azoreductase (azo1) from Staphylococcus saprophyticus subsp. saprophyticus (strain ATCC 15305 / DSM 20229 / NCIMB 8711 / NCTC 7292 / S-41).